A 1165-amino-acid chain; its full sequence is DNA-directed RNA polymerase subunit beta (1165 aa).

It belongs to the RNA polymerase beta chain family. As to quaternary structure, the RNAP catalytic core consists of 2 alpha, 1 beta, 1 beta' and 1 omega subunit. When a sigma factor is associated with the core the holoenzyme is formed, which can initiate transcription.

It catalyses the reaction RNA(n) + a ribonucleoside 5'-triphosphate = RNA(n+1) + diphosphate. DNA-dependent RNA polymerase catalyzes the transcription of DNA into RNA using the four ribonucleoside triphosphates as substrates. This is DNA-directed RNA polymerase subunit beta from Leifsonia xyli subsp. xyli (strain CTCB07).